The chain runs to 491 residues: Fatty acyl-CoA reductase 1 (491 aa).

This sequence belongs to the fatty acyl-CoA reductase family. As to expression, expressed in the endodermal cell layer surrounding the central vasculature in roots. Expressed in the hilum region of seeds. Expressed in lateral root tips, cotyledons, the shoot apex, young leaves, petals, stamen filaments, and receptacle of siliques.

The enzyme catalyses a long-chain fatty acyl-CoA + 2 NADPH + 2 H(+) = a long-chain primary fatty alcohol + 2 NADP(+) + CoA. Catalyzes the reduction of fatty acyl-CoA to fatty alcohols. Catalyzes specifically the formation of C18:0 and C22:0 fatty alcohols. Provides the fatty alcohols required for synthesis of suberin in roots, seed coat and wound-induced leaf tissue. Provides the fatty alcohols required for synthesis of alkyl hydroxycinnamates in root waxes. The chain is Fatty acyl-CoA reductase 1 from Arabidopsis thaliana (Mouse-ear cress).